Consider the following 345-residue polypeptide: NADPH-dependent curcumin reductase (345 aa).

The span at Met-1 to Arg-10 shows a compositional bias: basic residues. Positions Met-1–Glu-24 are disordered. NADP(+)-binding residues include Lys-186, Asn-225, and Asn-333.

As to quaternary structure, homodimer.

It carries out the reaction tetrahydrocurcumin + 2 NADP(+) = curcumin + 2 NADPH + 2 H(+). It catalyses the reaction tetrahydrocurcumin + NADP(+) = dihydrocurcumin + NADPH + H(+). The enzyme catalyses dihydrocurcumin + NADP(+) = curcumin + NADPH + H(+). Its activity is regulated as follows. Inhibited by thiol-specific reagents (p-chloromercuribenzoate and 5,5'-dithio-bis-2-nitrobenzoate). Functionally, catalyzes the metal-independent reduction of curcumin to dihydrocurcumin (DHC) as an intermediate product, followed by further reduction to tetrahydrocurcumin (THC) as an end product. It also acts on 3-octene-2-one, 3-hepten-2-one, resveratrol, and trans-2-octenal. The protein is NADPH-dependent curcumin reductase of Escherichia coli (strain K12).